Consider the following 464-residue polypeptide: NADH dehydrogenase [ubiquinone] flavoprotein 1, mitochondrial (464 aa).

The N-terminal 20 residues, 1-20 (MLATRRLLGWSLPARVSVRF), are a transit peptide targeting the mitochondrion. Lys81 carries the N6-acetyllysine; alternate modification. Lys81 carries the post-translational modification N6-succinyllysine; alternate. Position 87–96 (87–96 (GRGGAGFPTG)) interacts with NADH. Lys104 carries the N6-acetyllysine modification. 199–247 (RGAGAYICGEETALIESIEGKQGKPRLKPPFPADVGVFGCPTTVANVET) lines the FMN pocket. Omega-N-methylarginine is present on Arg257. Lys375 is modified (N6-acetyllysine). Residues Cys379, Cys382, Cys385, and Cys425 each coordinate [4Fe-4S] cluster.

The protein belongs to the complex I 51 kDa subunit family. Core subunit of respiratory chain NADH dehydrogenase (Complex I) which is composed of 45 different subunits. This is a component of the flavoprotein-sulfur (FP) fragment of the enzyme. Interacts with RAB5IF. FMN is required as a cofactor. Requires [4Fe-4S] cluster as cofactor.

The protein localises to the mitochondrion inner membrane. The catalysed reaction is a ubiquinone + NADH + 5 H(+)(in) = a ubiquinol + NAD(+) + 4 H(+)(out). Core subunit of the mitochondrial membrane respiratory chain NADH dehydrogenase (Complex I) which catalyzes electron transfer from NADH through the respiratory chain, using ubiquinone as an electron acceptor. Part of the peripheral arm of the enzyme, where the electrons from NADH are accepted by flavin mononucleotide (FMN) and then passed along a chain of iron-sulfur clusters by electron tunnelling to the final acceptor ubiquinone. Contains FMN, which is the initial electron acceptor as well as one iron-sulfur cluster. The sequence is that of NADH dehydrogenase [ubiquinone] flavoprotein 1, mitochondrial from Pan troglodytes (Chimpanzee).